Consider the following 773-residue polypeptide: Leucine-rich repeat and calponin homology domain-containing protein 2 (773 aa).

The segment at 1–46 (MAASQGGGGNSGGGGCSGGGSGGGGGAAGGGGGGGGGGGGGAGAGG) is disordered. LRR repeat units lie at residues 97-118 (NSGILSLSGRKLREFPGSGYDL), 120-141 (DTTQADLSRNRFTEIPSDVWLF), 143-164 (PLETLNLYHNCIKTIPEAIKNL), 166-187 (MLTYLNISRNLLSTLPKYLFDL), 188-209 (PLKVLVVSNNKLVSIPEEIGKL), 211-232 (DLMELDVSCNEIQVLPQQMGKL), 234-256 (SLKELNIRRNNLHVLPDELGDLP), 257-277 (LVKLDFSCNKVTEIPVCYRKL), and 279-300 (HLQVIILDNNPLQVPPAQICLK). 3 disordered regions span residues 324–409 (LDLP…QKDQ), 438–478 (FLKG…LKEV), and 573–633 (KYKS…SRQE). 2 stretches are compositionally biased toward basic and acidic residues: residues 386-396 (SNREQTSRNDS) and 440-466 (KGKEKSSEKSQKNEEPPNEKKVDKEQL). Over residues 594–603 (AHMSAQSPVS) the composition is skewed to polar residues. One can recognise a Calponin-homology (CH) domain in the interval 650–763 (LREEREQIRQ…VTVQALLELP (114 aa)).

In terms of biological role, may play a role in the organization of the cytoskeleton. The sequence is that of Leucine-rich repeat and calponin homology domain-containing protein 2 (Lrch2) from Mus musculus (Mouse).